A 548-amino-acid chain; its full sequence is Chaperonin GroEL (548 aa).

ATP-binding positions include 30–33 (TLGP), K51, 87–91 (DGTTT), G415, 479–481 (NAA), and D495. The interval 526-548 (REDKSSDVASSPAGGMGGMGGMM) is disordered. Over residues 539 to 548 (GGMGGMGGMM) the composition is skewed to gly residues.

It belongs to the chaperonin (HSP60) family. Forms a cylinder of 14 subunits composed of two heptameric rings stacked back-to-back. Interacts with the co-chaperonin GroES.

The protein localises to the cytoplasm. It carries out the reaction ATP + H2O + a folded polypeptide = ADP + phosphate + an unfolded polypeptide.. Functionally, together with its co-chaperonin GroES, plays an essential role in assisting protein folding. The GroEL-GroES system forms a nano-cage that allows encapsulation of the non-native substrate proteins and provides a physical environment optimized to promote and accelerate protein folding. The protein is Chaperonin GroEL of Buchnera aphidicola subsp. Schizaphis graminum (strain Sg).